Consider the following 278-residue polypeptide: 4-hydroxy-tetrahydrodipicolinate reductase (278 aa).

NAD(+) is bound by residues 13 to 18 and 111 to 113; these read GAAGKM and GTT. Histidine 167 serves as the catalytic Proton donor/acceptor. Histidine 168 serves as a coordination point for (S)-2,3,4,5-tetrahydrodipicolinate. Residue lysine 171 is the Proton donor of the active site. 177 to 178 provides a ligand contact to (S)-2,3,4,5-tetrahydrodipicolinate; that stretch reads GT.

This sequence belongs to the DapB family.

The protein localises to the cytoplasm. The enzyme catalyses (S)-2,3,4,5-tetrahydrodipicolinate + NAD(+) + H2O = (2S,4S)-4-hydroxy-2,3,4,5-tetrahydrodipicolinate + NADH + H(+). It carries out the reaction (S)-2,3,4,5-tetrahydrodipicolinate + NADP(+) + H2O = (2S,4S)-4-hydroxy-2,3,4,5-tetrahydrodipicolinate + NADPH + H(+). It participates in amino-acid biosynthesis; L-lysine biosynthesis via DAP pathway; (S)-tetrahydrodipicolinate from L-aspartate: step 4/4. Catalyzes the conversion of 4-hydroxy-tetrahydrodipicolinate (HTPA) to tetrahydrodipicolinate. The chain is 4-hydroxy-tetrahydrodipicolinate reductase from Mastigocladus laminosus (Fischerella sp.).